Reading from the N-terminus, the 311-residue chain is MQEIQKNTKKEQYNLNKLQKRLRRNVGEAIADFNMIEEGDRIMVCLSGGKDSYTMLEILRNLQQSAPINFSLVAVNLDQKQPGFPEHILPAYLEQLGVEYKIVEENTYGIVKEKIPEGKTTCSLCSRLRRGILYRTATELGATKIALGHHRDDILQTLFLNMFYGGKMKGMPPKLMSDDGKHIVIRPLAYCREKDIIRFAEAKAFPIIPCNLCGSQPNLQRQVIADMLRDWDKRYPGRIETMFSAMQNVVPSHLCDTNLFDFKGITHGSEVVDGGDLAFDREEIPLQPAGWQPEEDDTSLEALRLDVIEVK.

The PP-loop motif motif lies at 47 to 52 (SGGKDS). Cys-122, Cys-125, and Cys-213 together coordinate [4Fe-4S] cluster.

The protein belongs to the TtcA family. In terms of assembly, homodimer. The cofactor is Mg(2+). [4Fe-4S] cluster is required as a cofactor.

Its subcellular location is the cytoplasm. The enzyme catalyses cytidine(32) in tRNA + S-sulfanyl-L-cysteinyl-[cysteine desulfurase] + AH2 + ATP = 2-thiocytidine(32) in tRNA + L-cysteinyl-[cysteine desulfurase] + A + AMP + diphosphate + H(+). It participates in tRNA modification. Catalyzes the ATP-dependent 2-thiolation of cytidine in position 32 of tRNA, to form 2-thiocytidine (s(2)C32). The sulfur atoms are provided by the cysteine/cysteine desulfurase (IscS) system. This Salmonella paratyphi A (strain ATCC 9150 / SARB42) protein is tRNA-cytidine(32) 2-sulfurtransferase.